The sequence spans 468 residues: ATP synthase subunit beta (468 aa).

150–157 contributes to the ATP binding site; it reads GGAGVGKT.

It belongs to the ATPase alpha/beta chains family. As to quaternary structure, F-type ATPases have 2 components, CF(1) - the catalytic core - and CF(0) - the membrane proton channel. CF(1) has five subunits: alpha(3), beta(3), gamma(1), delta(1), epsilon(1). CF(0) has three main subunits: a(1), b(2) and c(9-12). The alpha and beta chains form an alternating ring which encloses part of the gamma chain. CF(1) is attached to CF(0) by a central stalk formed by the gamma and epsilon chains, while a peripheral stalk is formed by the delta and b chains.

The protein resides in the cell inner membrane. It carries out the reaction ATP + H2O + 4 H(+)(in) = ADP + phosphate + 5 H(+)(out). Functionally, produces ATP from ADP in the presence of a proton gradient across the membrane. The catalytic sites are hosted primarily by the beta subunits. This chain is ATP synthase subunit beta, found in Acidovorax ebreus (strain TPSY) (Diaphorobacter sp. (strain TPSY)).